A 458-amino-acid polypeptide reads, in one-letter code: tRNA modification GTPase MnmE (458 aa).

Residues R22, E84, and R123 each contribute to the (6S)-5-formyl-5,6,7,8-tetrahydrofolate site. Positions 220-379 constitute a TrmE-type G domain; the sequence is GIATAIIGRP…LEKAIADLFF (160 aa). N230 lines the K(+) pocket. Residues 230 to 235, 249 to 255, and 274 to 277 contribute to the GTP site; these read NVGKSS, TDIAGTT, and DTAG. Residue S234 participates in Mg(2+) binding. Residues T249, I251, and T254 each contribute to the K(+) site. T255 is a binding site for Mg(2+). K458 is a binding site for (6S)-5-formyl-5,6,7,8-tetrahydrofolate.

This sequence belongs to the TRAFAC class TrmE-Era-EngA-EngB-Septin-like GTPase superfamily. TrmE GTPase family. As to quaternary structure, homodimer. Heterotetramer of two MnmE and two MnmG subunits. It depends on K(+) as a cofactor.

It is found in the cytoplasm. In terms of biological role, exhibits a very high intrinsic GTPase hydrolysis rate. Involved in the addition of a carboxymethylaminomethyl (cmnm) group at the wobble position (U34) of certain tRNAs, forming tRNA-cmnm(5)s(2)U34. The chain is tRNA modification GTPase MnmE from Bacillus cytotoxicus (strain DSM 22905 / CIP 110041 / 391-98 / NVH 391-98).